Consider the following 284-residue polypeptide: RNase adapter protein RapZ (284 aa).

8–15 (GRSGSGKS) provides a ligand contact to ATP. 56–59 (DVRN) lines the GTP pocket. Positions 266–284 (RSRGKNVQSRHRTLEKRKP) are RNA-binding.

Belongs to the RapZ-like family. RapZ subfamily. As to quaternary structure, homotrimer.

In terms of biological role, modulates the synthesis of GlmS, by affecting the processing and stability of the regulatory small RNA GlmZ. When glucosamine-6-phosphate (GlcN6P) concentrations are high in the cell, RapZ binds GlmZ and targets it to cleavage by RNase E. Consequently, GlmZ is inactivated and unable to activate GlmS synthesis. Under low GlcN6P concentrations, RapZ is sequestered and inactivated by an other regulatory small RNA, GlmY, preventing GlmZ degradation and leading to synthesis of GlmS. This Escherichia coli O1:K1 / APEC protein is RNase adapter protein RapZ.